Consider the following 185-residue polypeptide: Ribosome-recycling factor (185 aa).

It belongs to the RRF family.

It is found in the cytoplasm. Its function is as follows. Responsible for the release of ribosomes from messenger RNA at the termination of protein biosynthesis. May increase the efficiency of translation by recycling ribosomes from one round of translation to another. The chain is Ribosome-recycling factor from Corynebacterium urealyticum (strain ATCC 43042 / DSM 7109).